Reading from the N-terminus, the 708-residue chain is RNA-directed RNA polymerase catalytic subunit (708 aa).

The region spanning 281–467 (RIKEIGMKNQ…GLNVSQKKSF (187 aa)) is the RdRp catalytic domain.

As to quaternary structure, the RNA polymerase is composed of three subunits: PB1, PB2 and PA.

It carries out the reaction RNA(n) + a ribonucleoside 5'-triphosphate = RNA(n+1) + diphosphate. In terms of biological role, RNA-dependent RNA polymerase which is responsible for replication and transcription of virus segments. Binds the promoter sequence of the encapsidated viral RNA. Displays an endonuclease activity involved in cap-stealing. Cleaves cellular pre-mRNA to generate primers for viral transcription. The polypeptide is RNA-directed RNA polymerase catalytic subunit (Infectious salmon anemia virus (isolate Atlantic salmon/Norway/810/9/99) (ISAV)).